The following is a 176-amino-acid chain: Adenine phosphoribosyltransferase (176 aa).

Belongs to the purine/pyrimidine phosphoribosyltransferase family. As to quaternary structure, homodimer.

The protein localises to the cytoplasm. It catalyses the reaction AMP + diphosphate = 5-phospho-alpha-D-ribose 1-diphosphate + adenine. It participates in purine metabolism; AMP biosynthesis via salvage pathway; AMP from adenine: step 1/1. Functionally, catalyzes a salvage reaction resulting in the formation of AMP, that is energically less costly than de novo synthesis. This chain is Adenine phosphoribosyltransferase, found in Borreliella burgdorferi (strain ATCC 35210 / DSM 4680 / CIP 102532 / B31) (Borrelia burgdorferi).